The following is a 534-amino-acid chain: Serine protease vicPb (534 aa).

Positions 1 to 17 (MLRYLLIPILYLQVVLG) are cleaved as a signal peptide. 3 N-linked (GlcNAc...) asparagine glycosylation sites follow: asparagine 34, asparagine 65, and asparagine 126. The active-site Charge relay system is the serine 174. N-linked (GlcNAc...) asparagine glycans are attached at residues asparagine 297, asparagine 335, asparagine 352, asparagine 415, and asparagine 437. Aspartate 451 serves as the catalytic Charge relay system.

It belongs to the peptidase S28 family.

The protein operates within mycotoxin biosynthesis. Serine protease, part of the gene cluster that mediates the biosynthesis of the secondary metabolite victorin, the molecular basis for Victoria blight of oats. Within the pathway, vicPa and vicPb are probably involved in the processing of the vicA1 and vicA2 precursors. The pathway starts with the processing of the precursor vicA1 by several endopeptidases including kexin proteases as well as the cluster-specific S28 family peptidases vicPa and vicPb to produce 7 identical copies of the hexapeptide Gly-Leu-Lys-Leu-Ala-Phe. After being excised from the precursor peptide, the core peptides are cyclized and modified post-translationally by enzymes encoded within the gene cluster. The ustYa family oxidase vicYb is required for the formation of the macrocycle in victorin and the copper amine oxidases (CAOs) vicK1 and vicK2 are responsible for converting victorin to the active form by oxidizing the N-terminal glycyl residue in the peptides to glyoxylate. Relaxed substrate specificity of enzymes in the victorin biosynthetic pathway results in a metabolic grid that produces a set of analogs including victorinines B, C, E or HV-toxin M. The polypeptide is Serine protease vicPb (Bipolaris victoriae (strain FI3) (Victoria blight of oats agent)).